We begin with the raw amino-acid sequence, 583 residues long: Aspartate--tRNA ligase (583 aa).

An L-aspartate-binding site is contributed by E174. An aspartate region spans residues 198 to 201; sequence QTFK. Position 220 (R220) interacts with L-aspartate. ATP-binding positions include 220 to 222 and Q229; that span reads RDE. H445 contacts L-aspartate. ATP is bound at residue E479. R486 serves as a coordination point for L-aspartate. 531–534 contributes to the ATP binding site; it reads GLDR.

It belongs to the class-II aminoacyl-tRNA synthetase family. Type 1 subfamily. As to quaternary structure, homodimer.

It is found in the cytoplasm. The catalysed reaction is tRNA(Asp) + L-aspartate + ATP = L-aspartyl-tRNA(Asp) + AMP + diphosphate. Its function is as follows. Catalyzes the attachment of L-aspartate to tRNA(Asp) in a two-step reaction: L-aspartate is first activated by ATP to form Asp-AMP and then transferred to the acceptor end of tRNA(Asp). The protein is Aspartate--tRNA ligase of Flavobacterium psychrophilum (strain ATCC 49511 / DSM 21280 / CIP 103535 / JIP02/86).